The chain runs to 79 residues: Suppressor of tumorigenicity 20 protein (79 aa).

In terms of tissue distribution, expressed in leukocytes, lung, spleen, liver, heart, kidney, muscle and uterine cervix. Down-regulated in cervical cancer.

In terms of biological role, may act as a tumor suppressor. Promotes apoptosis of cancer cells. In Homo sapiens (Human), this protein is Suppressor of tumorigenicity 20 protein (ST20).